Here is a 229-residue protein sequence, read N- to C-terminus: MKQVRLLPPAPVRAVCALAVAALAGCAQIPRDPIIQQPMTAQPPMPMSMQAPGSIYNPGYAGRPLFEDQRPRNIGDILTIMIAENINATKSSGANTNRQGNTDFSVPTAGFLGGLFAKANMSAAGANKFAATGGASAANTFNGTITVTVTNVLPNGNLVVSGEKQMLINQGNEFVRFSGVVNPNTISGANSVYSTQVADAKIEYSSKGYINEAETMGWLQRFFLNIAPW.

Positions 1–25 are cleaved as a signal peptide; sequence MKQVRLLPPAPVRAVCALAVAALAG. Cys26 is lipidated: N-palmitoyl cysteine. Cys26 is lipidated: S-diacylglycerol cysteine.

It belongs to the FlgH family. As to quaternary structure, the basal body constitutes a major portion of the flagellar organelle and consists of four rings (L,P,S, and M) mounted on a central rod.

It is found in the cell outer membrane. Its subcellular location is the bacterial flagellum basal body. Assembles around the rod to form the L-ring and probably protects the motor/basal body from shearing forces during rotation. The polypeptide is Flagellar L-ring protein (Burkholderia ambifaria (strain ATCC BAA-244 / DSM 16087 / CCUG 44356 / LMG 19182 / AMMD) (Burkholderia cepacia (strain AMMD))).